A 277-amino-acid polypeptide reads, in one-letter code: NADPH-dependent 7-cyano-7-deazaguanine reductase (277 aa).

83–85 (IES) lines the substrate pocket. 85 to 86 (SK) is a binding site for NADPH. Cys-184 acts as the Thioimide intermediate in catalysis. The Proton donor role is filled by Asp-191. Residue 223 to 224 (HE) participates in substrate binding. An NADPH-binding site is contributed by 252–253 (RG).

Belongs to the GTP cyclohydrolase I family. QueF type 2 subfamily. In terms of assembly, homodimer.

The protein resides in the cytoplasm. The enzyme catalyses 7-aminomethyl-7-carbaguanine + 2 NADP(+) = 7-cyano-7-deazaguanine + 2 NADPH + 3 H(+). The protein operates within tRNA modification; tRNA-queuosine biosynthesis. Its function is as follows. Catalyzes the NADPH-dependent reduction of 7-cyano-7-deazaguanine (preQ0) to 7-aminomethyl-7-deazaguanine (preQ1). The sequence is that of NADPH-dependent 7-cyano-7-deazaguanine reductase from Cupriavidus necator (strain ATCC 17699 / DSM 428 / KCTC 22496 / NCIMB 10442 / H16 / Stanier 337) (Ralstonia eutropha).